A 101-amino-acid polypeptide reads, in one-letter code: Small ribosomal subunit protein bS18c (101 aa).

The span at 1–19 shows a compositional bias: basic residues; the sequence is MNKSKRPFTKSKRSFRRRL. Residues 1-23 are disordered; the sequence is MNKSKRPFTKSKRSFRRRLPPIQ.

This sequence belongs to the bacterial ribosomal protein bS18 family. As to quaternary structure, part of the 30S ribosomal subunit.

The protein localises to the plastid. It is found in the chloroplast. The sequence is that of Small ribosomal subunit protein bS18c from Draba nemorosa (Woodland whitlowgrass).